Consider the following 184-residue polypeptide: Probable chemoreceptor glutamine deamidase CheD (184 aa).

It belongs to the CheD family.

The catalysed reaction is L-glutaminyl-[protein] + H2O = L-glutamyl-[protein] + NH4(+). Functionally, probably deamidates glutamine residues to glutamate on methyl-accepting chemotaxis receptors (MCPs), playing an important role in chemotaxis. The chain is Probable chemoreceptor glutamine deamidase CheD from Rhizobium etli (strain CIAT 652).